Consider the following 68-residue polypeptide: Large ribosomal subunit protein bL32 (68 aa).

Belongs to the bacterial ribosomal protein bL32 family.

The polypeptide is Large ribosomal subunit protein bL32 (Ruegeria pomeroyi (strain ATCC 700808 / DSM 15171 / DSS-3) (Silicibacter pomeroyi)).